The chain runs to 197 residues: Imidazoleglycerol-phosphate dehydratase (197 aa).

It belongs to the imidazoleglycerol-phosphate dehydratase family.

It localises to the cytoplasm. The catalysed reaction is D-erythro-1-(imidazol-4-yl)glycerol 3-phosphate = 3-(imidazol-4-yl)-2-oxopropyl phosphate + H2O. It functions in the pathway amino-acid biosynthesis; L-histidine biosynthesis; L-histidine from 5-phospho-alpha-D-ribose 1-diphosphate: step 6/9. This Halorhodospira halophila (strain DSM 244 / SL1) (Ectothiorhodospira halophila (strain DSM 244 / SL1)) protein is Imidazoleglycerol-phosphate dehydratase.